The following is a 1194-amino-acid chain: Metabotropic glutamate receptor 1 (1194 aa).

Positions 1 to 18 are cleaved as a signal peptide; the sequence is MVGLLLFFFPAIFLEVSL. The Extracellular portion of the chain corresponds to 19 to 592; sequence LPRSPGRKVL…VRYLEWSNIE (574 aa). Cysteines 67 and 109 form a disulfide. Position 74 (tyrosine 74) interacts with L-glutamate. N-linked (GlcNAc...) asparagine glycosylation is present at asparagine 98. L-glutamate is bound by residues serine 165 and 186–188; that span reads SAT. Asparagine 223 is a glycosylation site (N-linked (GlcNAc...) asparagine). Tyrosine 236 serves as a coordination point for L-glutamate. Cysteine 289 and cysteine 291 are joined by a disulfide. Aspartate 318 contributes to the L-glutamate binding site. Residues cysteine 378 and cysteine 394 are joined by a disulfide bond. Asparagine 397 carries an N-linked (GlcNAc...) asparagine glycan. Lysine 409 contributes to the L-glutamate binding site. A disulfide bond links cysteine 432 and cysteine 439. Asparagine 515 is a glycosylation site (N-linked (GlcNAc...) asparagine). A helical transmembrane segment spans residues 593–615; that stretch reads SIIAIAFSCLGILVTLFVTLIFV. At 616-629 the chain is on the cytoplasmic side; the sequence is LYRDTPVVKSSSRE. A helical membrane pass occupies residues 630 to 650; the sequence is LCYIILAGIFLGYVCPFTLIA. At 651–658 the chain is on the extracellular side; it reads KPTTTSCY. Cysteine 657 and cysteine 746 are disulfide-bonded. Residues 659-680 traverse the membrane as a helical segment; that stretch reads LQRLLVGLSSAMCYSALVTKTN. Over 681 to 703 the chain is Cytoplasmic; it reads RIARILAGSKKKICTRKPRFMSA. Residues 704 to 727 traverse the membrane as a helical segment; it reads WAQVIIASILISVQLTLVVTLIIM. Residues 728–750 are Extracellular-facing; sequence EPPMPILSYPSIKEVYLICNTSN. A helical membrane pass occupies residues 751 to 772; sequence LGVVAPLGYNGLLIMSCTYYAF. Topologically, residues 773-785 are cytoplasmic; it reads KTRNVPANFNEAK. The chain crosses the membrane as a helical span at residues 786–807; sequence YIAFTMYTTCIIWLAFVPIYFG. The Extracellular portion of the chain corresponds to 808–815; sequence SNYKIITT. The chain crosses the membrane as a helical span at residues 816–840; it reads CFAVSLSVTVALGCMFTPKMYIIIA. Topologically, residues 841 to 1194 are cytoplasmic; the sequence is KPERNVRSAF…RDYKQSSSTL (354 aa). At serine 853 the chain carries Phosphoserine. Threonine 871 is subject to Phosphothreonine. Positions 883–905 are disordered; that stretch reads AGNANSNGKSVSWSEPGGGQVPK. Over residues 885–895 the composition is skewed to polar residues; sequence NANSNGKSVSW. Serine 894 and serine 969 each carry phosphoserine. Residues 1007–1030 form a disordered region; sequence PALPKGLPPPLQQQQQPPPQQKSL. Pro residues predominate over residues 1012-1026; it reads GLPPPLQQQQQPPPQ. Residue serine 1091 is modified to Phosphoserine. Positions 1113-1173 are disordered; that stretch reads HEREGNTEED…SPVSESVLCT (61 aa). The span at 1119-1131 shows a compositional bias: acidic residues; sequence TEEDELEEEEEDL. The residue at position 1142 (serine 1142) is a Phosphoserine. At threonine 1146 the chain carries Phosphothreonine. Residue serine 1149 is modified to Phosphoserine. Positions 1154-1170 are enriched in low complexity; that stretch reads SVASGSSVPSSPVSESV.

This sequence belongs to the G-protein coupled receptor 3 family. In terms of assembly, homodimer; disulfide-linked. The PPXXF motif binds HOMER1, HOMER2 and HOMER3. Interacts with TAMALIN. Interacts with RYR1, RYR2, ITPR1, SHANK1 and SHANK3. Interacts with SIAH1. In terms of tissue distribution, detected in brain.

The protein resides in the cell membrane. The protein localises to the postsynaptic cell membrane. It is found in the cell projection. Its subcellular location is the dendrite. Its activity is regulated as follows. Signaling is inhibited by the antagonist LY341495. The LY341495 binding site partially overlaps with the glutamate binding site. Signaling is also inhibited by synthetic allosteric regulators, such as FITM (4-fluoro-N-(4-(6-(isopropylamino)pyrimidin-4-yl)thiazol-2-yl)-N-methylbenzamide) that bind in a pocket between the transmembrane helices. In terms of biological role, G-protein coupled receptor for glutamate. Ligand binding causes a conformation change that triggers signaling via guanine nucleotide-binding proteins (G proteins) and modulates the activity of down-stream effectors. Signaling activates a phosphatidylinositol-calcium second messenger system. May participate in the central action of glutamate in the CNS, such as long-term potentiation in the hippocampus and long-term depression in the cerebellum. May function in the light response in the retina. Induces GRID1 and GRID2 cation-channel activation via GNAQ-PLC-PKC pathway in dopaminergic neurons and cerebellar Purkinje cell, respectively. This is Metabotropic glutamate receptor 1 (GRM1) from Homo sapiens (Human).